We begin with the raw amino-acid sequence, 153 residues long: Aspartate carbamoyltransferase regulatory chain (153 aa).

Zn(2+) contacts are provided by cysteine 109, cysteine 114, cysteine 138, and cysteine 141.

Belongs to the PyrI family. In terms of assembly, contains catalytic and regulatory chains. Zn(2+) serves as cofactor.

In terms of biological role, involved in allosteric regulation of aspartate carbamoyltransferase. This Escherichia coli O7:K1 (strain IAI39 / ExPEC) protein is Aspartate carbamoyltransferase regulatory chain.